A 333-amino-acid chain; its full sequence is Ornithine carbamoyltransferase (333 aa).

Carbamoyl phosphate contacts are provided by residues 56 to 59 (STRT), arginine 107, and 134 to 137 (HPTQ). Residues asparagine 167, aspartate 231, and 235 to 236 (SM) contribute to the L-ornithine site. Residues 273-274 (CL) and arginine 318 contribute to the carbamoyl phosphate site.

The protein belongs to the aspartate/ornithine carbamoyltransferase superfamily. OTCase family.

It is found in the cytoplasm. The catalysed reaction is carbamoyl phosphate + L-ornithine = L-citrulline + phosphate + H(+). It functions in the pathway amino-acid degradation; L-arginine degradation via ADI pathway; carbamoyl phosphate from L-arginine: step 2/2. Its function is as follows. Reversibly catalyzes the transfer of the carbamoyl group from carbamoyl phosphate (CP) to the N(epsilon) atom of ornithine (ORN) to produce L-citrulline. This is Ornithine carbamoyltransferase from Clostridium botulinum (strain Kyoto / Type A2).